The chain runs to 304 residues: Transcription factor BEE 2 (304 aa).

A disordered region spans residues 74 to 132; sequence FHMEPVKNNGHSRAITLQNKRKPEGKTEKREKKKIKAEDETEPSMKGKSNMSNTETSSE. The segment covering 82–91 has biased composition (polar residues); it reads NGHSRAITLQ. Basic and acidic residues predominate over residues 94–103; the sequence is RKPEGKTEKR. The span at 120-132 shows a compositional bias: polar residues; it reads GKSNMSNTETSSE. In terms of domain architecture, bHLH spans 147 to 197; the sequence is EATDRHSLAERARREKISKKMKCLQDIVPGCNKVTGKAGMLDEIINYVQSL.

In terms of assembly, homodimer. Expressed in stems and flowers.

It is found in the nucleus. Positive regulator of brassinosteroid signaling. The protein is Transcription factor BEE 2 (BEE2) of Arabidopsis thaliana (Mouse-ear cress).